Consider the following 351-residue polypeptide: Tryptophan--tRNA ligase 2 (351 aa).

The interval 1–24 (MPFVDLEVPTMTTPTPAATPARPR) is disordered. Positions 9-24 (PTMTTPTPAATPARPR) are enriched in low complexity. Positions 31-39 (PTGALHLGH) match the 'HIGH' region motif. Residues 215 to 219 (KMSKS) carry the 'KMSKS' region motif. Lysine 218 is a binding site for ATP.

The protein belongs to the class-I aminoacyl-tRNA synthetase family. In terms of assembly, homodimer. Forms a complex with nos; one homodimer of trpS2 binds one homodimer of nos.

The catalysed reaction is tRNA(Trp) + L-tryptophan + ATP = L-tryptophyl-tRNA(Trp) + AMP + diphosphate + H(+). Functionally, catalyzes the formation of 5'adenyl-Trp and tRNA(Trp) but with 5-fold less activity than TrpRS. Increases the solubility of the nitric oxide synthase oxygenase (nos), as well as its affinity for substrate L-arginine and its nitric-oxide synthase activity. The complex between trpS2 and nos catalyzes the regioselective nitration of tryptophan at the 4-position. In Deinococcus radiodurans (strain ATCC 13939 / DSM 20539 / JCM 16871 / CCUG 27074 / LMG 4051 / NBRC 15346 / NCIMB 9279 / VKM B-1422 / R1), this protein is Tryptophan--tRNA ligase 2 (trpS2).